A 224-amino-acid chain; its full sequence is Ribonuclease T (224 aa).

In terms of domain architecture, Exonuclease spans 20–195; it reads VVIDVETAGF…YDTQKTAELF (176 aa). Residues D23, E25, H182, and D187 each contribute to the Mg(2+) site. Catalysis depends on H182, which acts as the Proton donor/acceptor.

This sequence belongs to the RNase T family. As to quaternary structure, homodimer. Mg(2+) serves as cofactor.

Trims short 3' overhangs of a variety of RNA species, leaving a one or two nucleotide 3' overhang. Responsible for the end-turnover of tRNA: specifically removes the terminal AMP residue from uncharged tRNA (tRNA-C-C-A). Also appears to be involved in tRNA biosynthesis. The protein is Ribonuclease T of Vibrio cholerae serotype O1 (strain ATCC 39315 / El Tor Inaba N16961).